Consider the following 409-residue polypeptide: Pentatricopeptide repeat-containing protein At5g09450, mitochondrial (409 aa).

The N-terminal 38 residues, 1-38 (MATRSLFHSLRCRLTNNGVLGSNFIRNAESSRFSKSYN), are a transit peptide targeting the mitochondrion. 6 PPR repeats span residues 155–189 (TAETYTSLLHAYAASKQTERAEALFKRIIESDSLT), 191–225 (GAITYNEMMTLYMSVGQVEKVPEVIEVLKQKKVSP), 226–256 (DIFTYNLWLSSCAATFNIDELRKILEEMRHD), 262–296 (GWVRYIDLTSIYINSSRVTNAESTLPVEAEKSISQ), 298–332 (EWITYDFLMILHTGLGNKVMIDQIWKSLRNTNQIL), and 333–367 (SSRSYICVLSSYLMLGHLREAEEIIHQWKESKTTE).

Belongs to the PPR family. P subfamily.

It is found in the mitochondrion. The polypeptide is Pentatricopeptide repeat-containing protein At5g09450, mitochondrial (Arabidopsis thaliana (Mouse-ear cress)).